The following is a 349-amino-acid chain: tRNA pseudouridine synthase D (349 aa).

Phe27 serves as a coordination point for substrate. Catalysis depends on Asp80, which acts as the Nucleophile. A substrate-binding site is contributed by Asn129. Positions 155–303 (GVPNYFGAQR…VEAARRAMLL (149 aa)) constitute a TRUD domain. Position 329 (Phe329) interacts with substrate.

This sequence belongs to the pseudouridine synthase TruD family.

The enzyme catalyses uridine(13) in tRNA = pseudouridine(13) in tRNA. In terms of biological role, responsible for synthesis of pseudouridine from uracil-13 in transfer RNAs. This Escherichia coli (strain SE11) protein is tRNA pseudouridine synthase D.